A 477-amino-acid polypeptide reads, in one-letter code: Ribulose bisphosphate carboxylase large chain (477 aa).

The propeptide occupies Met1–Ser2. An N-acetylproline modification is found at Pro3. The residue at position 14 (Lys14) is an N6,N6,N6-trimethyllysine. Substrate is bound by residues Asn123 and Thr173. Lys175 serves as the catalytic Proton acceptor. Lys177 contacts substrate. Mg(2+) contacts are provided by Lys201, Asp203, and Glu204. An N6-carboxylysine modification is found at Lys201. The active-site Proton acceptor is His294. Substrate is bound by residues Arg295, His327, and Ser379.

It belongs to the RuBisCO large chain family. Type I subfamily. Heterohexadecamer of 8 large chains and 8 small chains; disulfide-linked. The disulfide link is formed within the large subunit homodimers. Mg(2+) is required as a cofactor. In terms of processing, the disulfide bond which can form in the large chain dimeric partners within the hexadecamer appears to be associated with oxidative stress and protein turnover.

It is found in the plastid. The protein localises to the chloroplast. It catalyses the reaction 2 (2R)-3-phosphoglycerate + 2 H(+) = D-ribulose 1,5-bisphosphate + CO2 + H2O. The enzyme catalyses D-ribulose 1,5-bisphosphate + O2 = 2-phosphoglycolate + (2R)-3-phosphoglycerate + 2 H(+). Functionally, ruBisCO catalyzes two reactions: the carboxylation of D-ribulose 1,5-bisphosphate, the primary event in carbon dioxide fixation, as well as the oxidative fragmentation of the pentose substrate in the photorespiration process. Both reactions occur simultaneously and in competition at the same active site. This Solanum tuberosum (Potato) protein is Ribulose bisphosphate carboxylase large chain (rbcL).